Here is a 477-residue protein sequence, read N- to C-terminus: Glycogen synthase (477 aa).

Residue lysine 15 coordinates ADP-alpha-D-glucose.

Belongs to the glycosyltransferase 1 family. Bacterial/plant glycogen synthase subfamily.

It carries out the reaction [(1-&gt;4)-alpha-D-glucosyl](n) + ADP-alpha-D-glucose = [(1-&gt;4)-alpha-D-glucosyl](n+1) + ADP + H(+). It participates in glycan biosynthesis; glycogen biosynthesis. Synthesizes alpha-1,4-glucan chains using ADP-glucose. The sequence is that of Glycogen synthase from Streptococcus pneumoniae serotype 2 (strain D39 / NCTC 7466).